Reading from the N-terminus, the 243-residue chain is Ribosomal RNA small subunit methyltransferase E 2 (243 aa).

This sequence belongs to the RNA methyltransferase RsmE family.

It localises to the cytoplasm. It catalyses the reaction uridine(1498) in 16S rRNA + S-adenosyl-L-methionine = N(3)-methyluridine(1498) in 16S rRNA + S-adenosyl-L-homocysteine + H(+). Functionally, specifically methylates the N3 position of the uracil ring of uridine 1498 (m3U1498) in 16S rRNA. Acts on the fully assembled 30S ribosomal subunit. The protein is Ribosomal RNA small subunit methyltransferase E 2 (rsmE2) of Borreliella burgdorferi (strain ATCC 35210 / DSM 4680 / CIP 102532 / B31) (Borrelia burgdorferi).